A 122-amino-acid polypeptide reads, in one-letter code: Large ribosomal subunit protein uL14 (122 aa).

It belongs to the universal ribosomal protein uL14 family. As to quaternary structure, part of the 50S ribosomal subunit. Forms a cluster with proteins L3 and L19. In the 70S ribosome, L14 and L19 interact and together make contacts with the 16S rRNA in bridges B5 and B8.

Binds to 23S rRNA. Forms part of two intersubunit bridges in the 70S ribosome. The polypeptide is Large ribosomal subunit protein uL14 (Alkalilimnicola ehrlichii (strain ATCC BAA-1101 / DSM 17681 / MLHE-1)).